Reading from the N-terminus, the 831-residue chain is G-type lectin S-receptor-like serine/threonine-protein kinase At1g61390 (831 aa).

The signal sequence occupies residues 1-42 (MYKLPQRNCADKQEYTVHMRKMGMVIFACLLLLIIFPTFGYA). In terms of domain architecture, Bulb-type lectin spans 43 to 162 (DINTSSPLSI…VSGKTLWKSF (120 aa)). Over 43-448 (DINTSSPLSI…SSELAGSNRT (406 aa)) the chain is Extracellular. N-linked (GlcNAc...) asparagine glycosylation is found at asparagine 45, asparagine 71, asparagine 106, and asparagine 112. One can recognise an EGF-like; atypical domain in the interval 298–334 (PTSSCDLYRACGPFGLCVRSRNPKCICLKGFVPKSDD). Intrachain disulfides connect cysteine 302-cysteine 314 and cysteine 308-cysteine 322. Residues asparagine 340, asparagine 356, asparagine 399, and asparagine 446 are each glycosylated (N-linked (GlcNAc...) asparagine). The 87-residue stretch at 353–439 (CHTNSSTKTQ…GESLSLRLAS (87 aa)) folds into the PAN domain. Disulfide bonds link cysteine 392/cysteine 413 and cysteine 396/cysteine 402. The helical transmembrane segment at 449–469 (KIILGTTVSLSIFVILVFAAY) threads the bilayer. Topologically, residues 470 to 831 (KSWRYRTKQN…EITQSVIQGR (362 aa)) are cytoplasmic. The Protein kinase domain occupies 520 to 803 (FSSSNKLGQG…ELPSPKQPTF (284 aa)). ATP-binding positions include 526–534 (LGQGGFGPV) and lysine 548. Residues serine 554 and serine 569 each carry the phosphoserine modification. A caM-binding region spans residues 609-626 (TLKFEIDWQKRFNIIQGV). The active-site Proton acceptor is the aspartate 645. 2 positions are modified to phosphoserine: serine 649 and serine 662. Threonine 679 carries the post-translational modification Phosphothreonine. Phosphoserine is present on residues serine 722 and serine 814.

The protein belongs to the protein kinase superfamily. Ser/Thr protein kinase family.

It localises to the cell membrane. It carries out the reaction L-seryl-[protein] + ATP = O-phospho-L-seryl-[protein] + ADP + H(+). The catalysed reaction is L-threonyl-[protein] + ATP = O-phospho-L-threonyl-[protein] + ADP + H(+). The chain is G-type lectin S-receptor-like serine/threonine-protein kinase At1g61390 from Arabidopsis thaliana (Mouse-ear cress).